Reading from the N-terminus, the 196-residue chain is ATP-dependent Clp protease proteolytic subunit (196 aa).

The active-site Nucleophile is the S101. H126 is an active-site residue.

The protein belongs to the peptidase S14 family. Component of the chloroplastic Clp protease core complex.

The protein resides in the plastid. It localises to the chloroplast stroma. The enzyme catalyses Hydrolysis of proteins to small peptides in the presence of ATP and magnesium. alpha-casein is the usual test substrate. In the absence of ATP, only oligopeptides shorter than five residues are hydrolyzed (such as succinyl-Leu-Tyr-|-NHMec, and Leu-Tyr-Leu-|-Tyr-Trp, in which cleavage of the -Tyr-|-Leu- and -Tyr-|-Trp bonds also occurs).. Functionally, cleaves peptides in various proteins in a process that requires ATP hydrolysis. Has a chymotrypsin-like activity. Plays a major role in the degradation of misfolded proteins. The chain is ATP-dependent Clp protease proteolytic subunit from Pinus thunbergii (Japanese black pine).